The sequence spans 148 residues: Putative pre-16S rRNA nuclease (148 aa).

The protein belongs to the YqgF nuclease family.

Its subcellular location is the cytoplasm. In terms of biological role, could be a nuclease involved in processing of the 5'-end of pre-16S rRNA. In Chlamydia trachomatis serovar A (strain ATCC VR-571B / DSM 19440 / HAR-13), this protein is Putative pre-16S rRNA nuclease.